Consider the following 362-residue polypeptide: Probable branched-chain-amino-acid aminotransferase (362 aa).

At K202 the chain carries N6-(pyridoxal phosphate)lysine.

Belongs to the class-IV pyridoxal-phosphate-dependent aminotransferase family. The cofactor is pyridoxal 5'-phosphate.

It carries out the reaction L-leucine + 2-oxoglutarate = 4-methyl-2-oxopentanoate + L-glutamate. The enzyme catalyses L-isoleucine + 2-oxoglutarate = (S)-3-methyl-2-oxopentanoate + L-glutamate. The catalysed reaction is L-valine + 2-oxoglutarate = 3-methyl-2-oxobutanoate + L-glutamate. The protein operates within amino-acid biosynthesis; L-isoleucine biosynthesis; L-isoleucine from 2-oxobutanoate: step 4/4. It functions in the pathway amino-acid biosynthesis; L-leucine biosynthesis; L-leucine from 3-methyl-2-oxobutanoate: step 4/4. Its pathway is amino-acid biosynthesis; L-valine biosynthesis; L-valine from pyruvate: step 4/4. Its function is as follows. Acts on leucine, isoleucine and valine. The protein is Probable branched-chain-amino-acid aminotransferase (ilvE) of Streptomyces coelicolor (strain ATCC BAA-471 / A3(2) / M145).